The sequence spans 136 residues: Holo-[acyl-carrier-protein] synthase (136 aa).

Mg(2+)-binding residues include Asp8 and Glu58.

The protein belongs to the P-Pant transferase superfamily. AcpS family. Mg(2+) serves as cofactor.

Its subcellular location is the cytoplasm. It carries out the reaction apo-[ACP] + CoA = holo-[ACP] + adenosine 3',5'-bisphosphate + H(+). In terms of biological role, transfers the 4'-phosphopantetheine moiety from coenzyme A to a Ser of acyl-carrier-protein. This Leuconostoc mesenteroides subsp. mesenteroides (strain ATCC 8293 / DSM 20343 / BCRC 11652 / CCM 1803 / JCM 6124 / NCDO 523 / NBRC 100496 / NCIMB 8023 / NCTC 12954 / NRRL B-1118 / 37Y) protein is Holo-[acyl-carrier-protein] synthase.